A 678-amino-acid chain; its full sequence is DNA ligase (678 aa).

NAD(+)-binding positions include 32 to 36 (DSEYD), 81 to 82 (SL), and glutamate 113. The active-site N6-AMP-lysine intermediate is lysine 115. Residues arginine 136, glutamate 174, lysine 291, and lysine 315 each contribute to the NAD(+) site. Cysteine 409, cysteine 412, cysteine 427, and cysteine 433 together coordinate Zn(2+). The region spanning 596 to 678 (ASDNPFAGKT…MRLLGESSDA (83 aa)) is the BRCT domain.

The protein belongs to the NAD-dependent DNA ligase family. LigA subfamily. It depends on Mg(2+) as a cofactor. Mn(2+) serves as cofactor.

It carries out the reaction NAD(+) + (deoxyribonucleotide)n-3'-hydroxyl + 5'-phospho-(deoxyribonucleotide)m = (deoxyribonucleotide)n+m + AMP + beta-nicotinamide D-nucleotide.. Functionally, DNA ligase that catalyzes the formation of phosphodiester linkages between 5'-phosphoryl and 3'-hydroxyl groups in double-stranded DNA using NAD as a coenzyme and as the energy source for the reaction. It is essential for DNA replication and repair of damaged DNA. The protein is DNA ligase of Sodalis glossinidius (strain morsitans).